The primary structure comprises 512 residues: GMP synthase [glutamine-hydrolyzing] (512 aa).

The Glutamine amidotransferase type-1 domain maps to 5–195 (GIVILDFGSQ…IFGIAKAEKN (191 aa)). Cys-82 (nucleophile) is an active-site residue. Active-site residues include His-169 and Glu-171. One can recognise a GMPS ATP-PPase domain in the interval 196–387 (WSMENYIEST…LGIPDYMVDR (192 aa)). 223-229 (SGGVDSS) is a binding site for ATP.

As to quaternary structure, homodimer.

The enzyme catalyses XMP + L-glutamine + ATP + H2O = GMP + L-glutamate + AMP + diphosphate + 2 H(+). It functions in the pathway purine metabolism; GMP biosynthesis; GMP from XMP (L-Gln route): step 1/1. Its function is as follows. Catalyzes the synthesis of GMP from XMP. The sequence is that of GMP synthase [glutamine-hydrolyzing] from Fusobacterium nucleatum subsp. nucleatum (strain ATCC 25586 / DSM 15643 / BCRC 10681 / CIP 101130 / JCM 8532 / KCTC 2640 / LMG 13131 / VPI 4355).